We begin with the raw amino-acid sequence, 226 residues long: Transmembrane protein 204 (226 aa).

The Cytoplasmic portion of the chain corresponds to 1–5 (MTVRK). A helical transmembrane segment spans residues 6–26 (VVATAVLVALVSLVLNNAAAF). Residues 27 to 103 (TPNWVYQTLE…LQFDMMRACN (77 aa)) are Extracellular-facing. A helical transmembrane segment spans residues 104–124 (LVATAALAAGQLTFVLGLTGL). Topologically, residues 125–136 (PLLSPDAQCWEE) are cytoplasmic. Residues 137-157 (AMAAAFQLASFVLVIGLVTFY) form a helical membrane-spanning segment. The Extracellular segment spans residues 158 to 170 (RIGPYTSLSWSCY). Residues 171 to 191 (LNIGACLLATLAAAMLIWNVL) traverse the membrane as a helical segment. At 192–226 (HRREDCTAPRVIVISRSLTARFRRGLDNDYVESPC) the chain is on the cytoplasmic side.

The protein localises to the cell junction. It is found in the adherens junction. It localises to the cell membrane. In terms of biological role, can influence paracellular permeability. Appears to be involved in cell-cell interactions through adherens. In Bos taurus (Bovine), this protein is Transmembrane protein 204 (TMEM204).